The following is a 420-amino-acid chain: Serine/threonine-protein kinase PCRK2 (420 aa).

The interval 1 to 64 (MKCFLFPLGD…SNTSMSAREN (64 aa)) is disordered. The span at 22–36 (SPTSNFSDVNKSGSD) shows a compositional bias: polar residues. The segment covering 42–58 (VSGTSTVSSTGRNSNTS) has biased composition (low complexity). Phosphothreonine is present on Thr70. In terms of domain architecture, Protein kinase spans 81–366 (FSRSGMIGEG…EVLEMVTKIV (286 aa)). Residues 87 to 95 (IGEGGFGCV) and Lys115 contribute to the ATP site. A Phosphotyrosine modification is found at Tyr164. Asp215 (proton acceptor) is an active-site residue. Phosphoserine is present on residues Ser219 and Ser249. Thr250 and Thr255 each carry phosphothreonine. Tyr263 carries the post-translational modification Phosphotyrosine. Positions 369–396 (SSPGNGGKKPQLVPLKSQETSRVEEGKN) are disordered. The span at 387 to 396 (ETSRVEEGKN) shows a compositional bias: basic and acidic residues.

Belongs to the protein kinase superfamily. Ser/Thr protein kinase family. As to quaternary structure, interacts with FLS2.

The protein resides in the cell membrane. The catalysed reaction is L-seryl-[protein] + ATP = O-phospho-L-seryl-[protein] + ADP + H(+). It carries out the reaction L-threonyl-[protein] + ATP = O-phospho-L-threonyl-[protein] + ADP + H(+). In terms of biological role, functions redundantly with PCRK1 in basal resistance against bacterial pathogens and in regulation of plant immunity. Functions together with PCRK1 downstream of the pathogen-associated molecular pattern (PAMP) receptor FLS2. Contributes to the induction of SARD1 and CBP60G, which are transcriptional activator of ICS1, an enzyme involved in salicylate (SA) biosynthesis upon pathogen attack. This Arabidopsis thaliana (Mouse-ear cress) protein is Serine/threonine-protein kinase PCRK2.